The following is a 394-amino-acid chain: 1-deoxy-D-xylulose 5-phosphate reductoisomerase (394 aa).

5 residues coordinate NADPH: Thr-13, Gly-14, Thr-15, Ile-16, and Asn-125. Lys-126 is a binding site for 1-deoxy-D-xylulose 5-phosphate. Glu-127 contacts NADPH. Asp-151 is a Mn(2+) binding site. Positions 152, 153, 182, and 205 each coordinate 1-deoxy-D-xylulose 5-phosphate. Residue Glu-153 participates in Mn(2+) binding. Position 211 (Gly-211) interacts with NADPH. Positions 218, 223, 224, and 227 each coordinate 1-deoxy-D-xylulose 5-phosphate. Glu-227 contributes to the Mn(2+) binding site.

It belongs to the DXR family. It depends on Mg(2+) as a cofactor. Mn(2+) is required as a cofactor.

It catalyses the reaction 2-C-methyl-D-erythritol 4-phosphate + NADP(+) = 1-deoxy-D-xylulose 5-phosphate + NADPH + H(+). It participates in isoprenoid biosynthesis; isopentenyl diphosphate biosynthesis via DXP pathway; isopentenyl diphosphate from 1-deoxy-D-xylulose 5-phosphate: step 1/6. In terms of biological role, catalyzes the NADPH-dependent rearrangement and reduction of 1-deoxy-D-xylulose-5-phosphate (DXP) to 2-C-methyl-D-erythritol 4-phosphate (MEP). The sequence is that of 1-deoxy-D-xylulose 5-phosphate reductoisomerase from Methylobacillus flagellatus (strain ATCC 51484 / DSM 6875 / VKM B-1610 / KT).